The chain runs to 246 residues: 1-(5-phosphoribosyl)-5-[(5-phosphoribosylamino)methylideneamino] imidazole-4-carboxamide isomerase (246 aa).

The active-site Proton acceptor is aspartate 8. Residue aspartate 130 is the Proton donor of the active site.

The protein belongs to the HisA/HisF family.

The protein resides in the cytoplasm. It carries out the reaction 1-(5-phospho-beta-D-ribosyl)-5-[(5-phospho-beta-D-ribosylamino)methylideneamino]imidazole-4-carboxamide = 5-[(5-phospho-1-deoxy-D-ribulos-1-ylimino)methylamino]-1-(5-phospho-beta-D-ribosyl)imidazole-4-carboxamide. It participates in amino-acid biosynthesis; L-histidine biosynthesis; L-histidine from 5-phospho-alpha-D-ribose 1-diphosphate: step 4/9. This is 1-(5-phosphoribosyl)-5-[(5-phosphoribosylamino)methylideneamino] imidazole-4-carboxamide isomerase from Hydrogenovibrio crunogenus (strain DSM 25203 / XCL-2) (Thiomicrospira crunogena).